Reading from the N-terminus, the 294-residue chain is Probable 2-(5''-triphosphoribosyl)-3'-dephosphocoenzyme-A synthase (294 aa).

It belongs to the CitG/MdcB family.

The catalysed reaction is 3'-dephospho-CoA + ATP = 2'-(5''-triphospho-alpha-D-ribosyl)-3'-dephospho-CoA + adenine. This is Probable 2-(5''-triphosphoribosyl)-3'-dephosphocoenzyme-A synthase from Streptococcus equi subsp. zooepidemicus (strain H70).